A 328-amino-acid chain; its full sequence is tRNA uridine(34) hydroxylase (328 aa).

In terms of domain architecture, Rhodanese spans 130–224 (LDEDTIVLDT…YGKDPEVQGE (95 aa)). The active-site Cysteine persulfide intermediate is the cysteine 184.

It belongs to the TrhO family.

The enzyme catalyses uridine(34) in tRNA + AH2 + O2 = 5-hydroxyuridine(34) in tRNA + A + H2O. Its function is as follows. Catalyzes oxygen-dependent 5-hydroxyuridine (ho5U) modification at position 34 in tRNAs. The chain is tRNA uridine(34) hydroxylase from Streptococcus uberis (strain ATCC BAA-854 / 0140J).